A 441-amino-acid chain; its full sequence is uncharacterized protein (441 aa).

This is an uncharacterized protein from Ictalurid herpesvirus 1 (strain Auburn) (IcHV-1).